Consider the following 603-residue polypeptide: Aspartate--tRNA(Asp/Asn) ligase (603 aa).

Glu-182 is an L-aspartate binding site. The segment at 206–209 (QLFK) is aspartate. L-aspartate is bound at residue Arg-228. Residues 228–230 (RDE) and Gln-237 contribute to the ATP site. Position 454 (His-454) interacts with L-aspartate. Position 500 (Glu-500) interacts with ATP. Arg-507 serves as a coordination point for L-aspartate. 552 to 555 (GLDR) is an ATP binding site.

This sequence belongs to the class-II aminoacyl-tRNA synthetase family. Type 1 subfamily. Homodimer.

The protein resides in the cytoplasm. The catalysed reaction is tRNA(Asx) + L-aspartate + ATP = L-aspartyl-tRNA(Asx) + AMP + diphosphate. Aspartyl-tRNA synthetase with relaxed tRNA specificity since it is able to aspartylate not only its cognate tRNA(Asp) but also tRNA(Asn). Reaction proceeds in two steps: L-aspartate is first activated by ATP to form Asp-AMP and then transferred to the acceptor end of tRNA(Asp/Asn). This is Aspartate--tRNA(Asp/Asn) ligase from Aquifex aeolicus (strain VF5).